Here is a 115-residue protein sequence, read N- to C-terminus: Probable 4-amino-4-deoxy-L-arabinose-phosphoundecaprenol flippase subunit ArnE (115 aa).

3 helical membrane passes run 42-62, 65-85, and 93-112; these read PWPW…LLLL, VEVG…TLAA, and VDRR…VLLG. One can recognise an EamA domain in the interval 46–113; sequence LALLALGLGL…IVAGVVLLGR (68 aa).

This sequence belongs to the ArnE family. As to quaternary structure, heterodimer of ArnE and ArnF.

Its subcellular location is the cell inner membrane. The protein operates within bacterial outer membrane biogenesis; lipopolysaccharide biosynthesis. Its function is as follows. Translocates 4-amino-4-deoxy-L-arabinose-phosphoundecaprenol (alpha-L-Ara4N-phosphoundecaprenol) from the cytoplasmic to the periplasmic side of the inner membrane. This is Probable 4-amino-4-deoxy-L-arabinose-phosphoundecaprenol flippase subunit ArnE from Pseudomonas aeruginosa (strain UCBPP-PA14).